Reading from the N-terminus, the 491-residue chain is Allene oxide synthase 3 (491 aa).

Lys-104, His-135, and Lys-139 together coordinate heme b. Positions 296 and 302 each coordinate (13S)-hydroperoxy-(9Z,11E)-octadecadienoate. Asn-296 serves as a coordination point for (13S)-hydroperoxy-(9Z,11E,15Z)-octadecatrienoate. The heme b site is built by Lys-442 and Cys-444.

It belongs to the cytochrome P450 family. The cofactor is heme b. In terms of tissue distribution, expressed in roots. Not detected in aerial tissues, including cotyledons, leaves, stems and flower buds.

It catalyses the reaction (13S)-hydroperoxy-(9Z,11E,15Z)-octadecatrienoate = (9Z,13S,15Z)-12,13-epoxyoctadeca-9,11,15-trienoate + H2O. It carries out the reaction (13S)-hydroperoxy-(9Z,11E)-octadecadienoate = (9Z,13S)-12,13-epoxyoctadeca-9,11-dienoate + H2O. The enzyme catalyses (9Z,13S,15Z)-12,13-epoxyoctadeca-9,11,15-trienoate = (9S,13S,15Z)-12-oxophyto-10,15-dienoate. Cytochrome P450 metabolizing both 13- and 9-hydroperoxides of linoleic and linolenic acids, but with a marked preference for 9-hydroperoxy fatty acids. Catalyzes not only the synthesis of allene oxide, but also its hydrolysis and cyclization. The first step is the synthesis of (12Z)-9,10-epoxyoctadeca-10,12-dienoic acid (9,10-EOD) and the final products are (9R)-alpha-ketol and the racemic cis-10-oxo-11-phytoenoic acid. The cyclase activity possesses regiospecificity and (9Z)-12,13-epoxyoctadeca-9,11-dienoic acid (12,13-EOD) is significantly less efficient as a substrate for cyclopentenone production than 9,10-EOD. Has no hydroperoxide lyase activity. May play a defensive role against soil-borne pests that affect roots or juvenile tissues as they emerge from the germinating seed. This chain is Allene oxide synthase 3, found in Solanum lycopersicum (Tomato).